Here is a 365-residue protein sequence, read N- to C-terminus: Chorismate synthase (365 aa).

Arg-47 provides a ligand contact to NADP(+). Residues 124–126 (RAS), Gly-287, 302–306 (KPTAT), and Arg-328 each bind FMN.

Belongs to the chorismate synthase family. In terms of assembly, homotetramer. It depends on FMNH2 as a cofactor.

It carries out the reaction 5-O-(1-carboxyvinyl)-3-phosphoshikimate = chorismate + phosphate. It functions in the pathway metabolic intermediate biosynthesis; chorismate biosynthesis; chorismate from D-erythrose 4-phosphate and phosphoenolpyruvate: step 7/7. In terms of biological role, catalyzes the anti-1,4-elimination of the C-3 phosphate and the C-6 proR hydrogen from 5-enolpyruvylshikimate-3-phosphate (EPSP) to yield chorismate, which is the branch point compound that serves as the starting substrate for the three terminal pathways of aromatic amino acid biosynthesis. This reaction introduces a second double bond into the aromatic ring system. The protein is Chorismate synthase of Prochlorococcus marinus (strain MIT 9312).